A 274-amino-acid polypeptide reads, in one-letter code: Phosphate import ATP-binding protein PstB (274 aa).

Residues 28 to 269 form the ABC transporter domain; the sequence is VTVRDLNFYY…PNDRRTQDYI (242 aa). ATP is bound at residue 60 to 67; it reads GPSGCGKS.

The protein belongs to the ABC transporter superfamily. Phosphate importer (TC 3.A.1.7) family. The complex is composed of two ATP-binding proteins (PstB), two transmembrane proteins (PstC and PstA) and a solute-binding protein (PstS).

Its subcellular location is the cell inner membrane. It catalyses the reaction phosphate(out) + ATP + H2O = ADP + 2 phosphate(in) + H(+). Its function is as follows. Part of the ABC transporter complex PstSACB involved in phosphate import. Responsible for energy coupling to the transport system. This chain is Phosphate import ATP-binding protein PstB, found in Rhodopseudomonas palustris (strain HaA2).